We begin with the raw amino-acid sequence, 473 residues long: Uronate isomerase (473 aa).

It belongs to the metallo-dependent hydrolases superfamily. Uronate isomerase family.

The enzyme catalyses D-glucuronate = D-fructuronate. The catalysed reaction is aldehydo-D-galacturonate = keto-D-tagaturonate. It functions in the pathway carbohydrate metabolism; pentose and glucuronate interconversion. In Bacillus subtilis (strain 168), this protein is Uronate isomerase (uxaC).